Here is a 225-residue protein sequence, read N- to C-terminus: Orotate phosphoribosyltransferase (225 aa).

Lys29 contacts 5-phospho-alpha-D-ribose 1-diphosphate. Position 37 to 38 (Phe37 to Phe38) interacts with orotate. 5-phospho-alpha-D-ribose 1-diphosphate is bound by residues Tyr75–Lys76, Arg105, Lys106, Lys109, His111, and Asp130–Ser138. Residues Thr134 and Arg162 each contribute to the orotate site.

It belongs to the purine/pyrimidine phosphoribosyltransferase family. PyrE subfamily. As to quaternary structure, homodimer. The cofactor is Mg(2+).

It carries out the reaction orotidine 5'-phosphate + diphosphate = orotate + 5-phospho-alpha-D-ribose 1-diphosphate. It participates in pyrimidine metabolism; UMP biosynthesis via de novo pathway; UMP from orotate: step 1/2. Catalyzes the transfer of a ribosyl phosphate group from 5-phosphoribose 1-diphosphate to orotate, leading to the formation of orotidine monophosphate (OMP). This Bordetella petrii (strain ATCC BAA-461 / DSM 12804 / CCUG 43448) protein is Orotate phosphoribosyltransferase.